The primary structure comprises 588 residues: Nucleoporin ndc-1 (588 aa).

The segment covering 1–12 has biased composition (polar residues); that stretch reads MMGDSHSSFTTT. The interval 1-55 is disordered; the sequence is MMGDSHSSFTTTTDEHLYNQFSPGRRKNDFPAASSSSSSPNLRRSPNRTVSSPRV. Residues 1 to 79 are Cytoplasmic-facing; the sequence is MMGDSHSSFT…FQAEISVRKR (79 aa). Positions 31–48 are enriched in low complexity; the sequence is PAASSSSSSPNLRRSPNR. The helical transmembrane segment at 80-100 threads the bilayer; sequence LAGAACGYLSTIFFIVTVSIL. Over 101–122 the chain is Perinuclear space; the sequence is KLTIWAPFSSVQDSLAWWIYPN. The chain crosses the membrane as a helical span at residues 123–143; it reads AWASIIFVGIASVAMSLFSII. Over 144–159 the chain is Cytoplasmic; sequence KFCKVDQLPRLAATDT. The helical transmembrane segment at 160-180 threads the bilayer; it reads FALAGVALEFVTRLTFVYTAF. The Perinuclear space portion of the chain corresponds to 181 to 190; that stretch reads CVADFSFSRE. A helical membrane pass occupies residues 191 to 211; it reads FAFVAISLAIAISSALVVFRS. The Cytoplasmic portion of the chain corresponds to 212–255; it reads DYQLNFSHIQVNSVKTLIDFGTSLPYANISEICGIDAAISYTAA. The helical transmembrane segment at 256-276 threads the bilayer; that stretch reads VALILVVGPMVSGFSAWWLLL. N277 is a topological domain (perinuclear space). Residues 278–298 form a helical membrane-spanning segment; it reads IPFHVVLFGLCFTQQFYSKIS. The Cytoplasmic portion of the chain corresponds to 299 to 588; it reads MKIVNQIVMK…IRMICLTDEL (290 aa).

Belongs to the NDC1 family.

The protein localises to the nucleus. The protein resides in the nuclear pore complex. It localises to the nucleus membrane. Component of the nuclear pore complex (NPC), which plays a key role in de novo assembly and insertion of NPC in the nuclear envelope. Plays a role in postmitotic nuclear pore complex assembly potentially by promoting localization of nuclear pore complex proteins to the nuclear rim. This is Nucleoporin ndc-1 from Caenorhabditis elegans.